Consider the following 624-residue polypeptide: Alpha-mannosidase I MNS4 (624 aa).

Over 1-7 the chain is Cytoplasmic; the sequence is MDSNFKW. The helical; Signal-anchor for type II membrane protein transmembrane segment at 8–28 threads the bilayer; the sequence is LLFAILISLTFSGFVLHHGVL. Residues 29-624 lie on the Lumenal side of the membrane; it reads AESVKPDEAK…ETDDQRSYSS (596 aa). N-linked (GlcNAc...) asparagine glycosylation occurs at Asn-115. The active-site Proton donor is the Glu-122. Asp-262 is a catalytic residue. The active-site Proton donor is Glu-355. The active site involves Glu-376. Thr-466 serves as a coordination point for Ca(2+). Asn-494 is a glycosylation site (N-linked (GlcNAc...) asparagine). Positions 574-624 are disordered; sequence QTVEKRPQEEEGFTSQSEPIMTISGGSSNDQTGQELTLLESETDDQRSYSS. Over residues 586 to 608 the composition is skewed to polar residues; it reads FTSQSEPIMTISGGSSNDQTGQE.

The protein belongs to the glycosyl hydrolase 47 family. Requires Ca(2+) as cofactor.

The protein resides in the endoplasmic reticulum membrane. It participates in protein modification; protein glycosylation. Functionally, can convert Man(9)GlcNAc(2) and Man(8)GlcNAc(2) into N-glycans with a terminal alpha-1,6-linked Man residue in the C-branch. Functions in the formation of unique N-glycan structures that are specifically recognized by components of the endoplasmic reticulum-associated degradation (ERAD) machinery, which leads to the degradation of misfolded glycoproteins. Most likely generates N-glycan signal on misfolded glycoproteins that is subsequently recognized by OS9. Required for ERAD of the heavily glycosylated and misfolded BRI1 variants BRI1-5 and BRI1-9. Does not seem to play role in N-glycan processing of correctly folded proteins destined for secretion. The polypeptide is Alpha-mannosidase I MNS4 (MNS4) (Arabidopsis thaliana (Mouse-ear cress)).